The sequence spans 1022 residues: Translation initiation factor IF-2 (1022 aa).

Residues 82 to 94 (EQSRKTLEKEQHL) are compositionally biased toward basic and acidic residues. 2 disordered regions span residues 82-129 (EQSR…AVPA) and 342-436 (SENK…QREL). Residues 104–115 (ASKSSAKGSESA) show a composition bias toward low complexity. Residues 375 to 384 (KAKKGKKKKK) are compositionally biased toward basic residues. Positions 421–436 (SEREREQEEGAAQREL) are enriched in basic and acidic residues. A tr-type G domain is found at 519-689 (TRPPVVTIMG…LTEAELRELK (171 aa)). Residues 528–535 (GHVDHGKT) are G1. Residue 528–535 (GHVDHGKT) coordinates GTP. Positions 553–557 (GITQH) are G2. A G3 region spans residues 575–578 (DTPG). GTP is bound by residues 575–579 (DTPGH) and 629–632 (NKID). A G4 region spans residues 629 to 632 (NKID). The G5 stretch occupies residues 665–667 (SAK).

Belongs to the TRAFAC class translation factor GTPase superfamily. Classic translation factor GTPase family. IF-2 subfamily.

The protein localises to the cytoplasm. In terms of biological role, one of the essential components for the initiation of protein synthesis. Protects formylmethionyl-tRNA from spontaneous hydrolysis and promotes its binding to the 30S ribosomal subunits. Also involved in the hydrolysis of GTP during the formation of the 70S ribosomal complex. The sequence is that of Translation initiation factor IF-2 from Chlorobium chlorochromatii (strain CaD3).